Reading from the N-terminus, the 649-residue chain is Glycerol-3-phosphate dehydrogenase, mitochondrial (649 aa).

Position 69 to 97 (69 to 97 (DVLIIGGGATGTGCALDAATRGLNVALVE)) interacts with FAD.

The protein belongs to the FAD-dependent glycerol-3-phosphate dehydrogenase family. Requires FAD as cofactor.

The protein resides in the mitochondrion inner membrane. The protein localises to the mitochondrion intermembrane space. It carries out the reaction a quinone + sn-glycerol 3-phosphate = dihydroxyacetone phosphate + a quinol. Its pathway is polyol metabolism; glycerol degradation via glycerol kinase pathway; glycerone phosphate from sn-glycerol 3-phosphate (anaerobic route): step 1/1. The chain is Glycerol-3-phosphate dehydrogenase, mitochondrial (GUT2) from Saccharomyces cerevisiae (strain ATCC 204508 / S288c) (Baker's yeast).